Consider the following 175-residue polypeptide: Archaemetzincin (175 aa).

His-125 contributes to the Zn(2+) binding site. Glu-126 serves as the catalytic Proton acceptor. Zn(2+) is bound by residues His-129, His-135, Cys-136, Cys-141, Cys-160, and Cys-163.

Belongs to the peptidase M54 family. In terms of assembly, monomer. Requires Zn(2+) as cofactor.

Probable zinc metalloprotease whose natural substrate is unknown. Does not show endo- or exopeptidase activity against resorufin labeled casein, p-nitroanilide (pNA), amidomethylcoumarin (AMC) (one to three amino acids in length), and hippuryl-aminoacid substrates. This is Archaemetzincin from Methanopyrus kandleri (strain AV19 / DSM 6324 / JCM 9639 / NBRC 100938).